Reading from the N-terminus, the 211-residue chain is Large ribosomal subunit protein uL4 (211 aa).

A disordered region spans residues 42–73; it reads NNRQGTHSTKDRSEVRGGGIKPWAQKGTGRAR.

Belongs to the universal ribosomal protein uL4 family. Part of the 50S ribosomal subunit.

Its function is as follows. One of the primary rRNA binding proteins, this protein initially binds near the 5'-end of the 23S rRNA. It is important during the early stages of 50S assembly. It makes multiple contacts with different domains of the 23S rRNA in the assembled 50S subunit and ribosome. In terms of biological role, forms part of the polypeptide exit tunnel. The chain is Large ribosomal subunit protein uL4 from Leptospira biflexa serovar Patoc (strain Patoc 1 / Ames).